The sequence spans 133 residues: Egg protein CP422 (133 aa).

The signal sequence occupies residues 1-21 (MHECMIVFFIFAVVSIYYADA). Disulfide bonds link Cys-107–Cys-121, Cys-114–Cys-125, and Cys-120–Cys-130.

The protein localises to the secreted. The protein is Egg protein CP422 (CP422) of Schistosoma japonicum (Blood fluke).